The chain runs to 259 residues: Haloacid dehalogenase-like hydrolase domain-containing protein 2 (259 aa).

Mg(2+) is bound by residues Asp-13 and Ser-15. Substrate contacts are provided by residues 13 to 15 (DLS) and 46 to 47 (TN). Residues 49–71 (TKESKRDLLERLRKLEFDISEEE) adopt a coiled-coil conformation. N6-succinyllysine is present on Lys-50. Lys-179 contributes to the substrate binding site. Asp-204 lines the Mg(2+) pocket.

The protein belongs to the HAD-like hydrolase superfamily. The cofactor is Mg(2+).

The chain is Haloacid dehalogenase-like hydrolase domain-containing protein 2 (Hdhd2) from Rattus norvegicus (Rat).